Reading from the N-terminus, the 88-residue chain is Early E1B 9 kDa protein (88 aa).

Positions 23 to 88 (NMEGSQDEDN…DLFPELRRLP (66 aa)) are disordered. Residues 34–44 (RLLASAASGSS) show a composition bias toward low complexity.

This chain is Early E1B 9 kDa protein, found in Homo sapiens (Human).